The chain runs to 103 residues: Protein Rev (103 aa).

A Phosphoserine; by host CK2 modification is found at Ser-5. Positions 18-26 (VIKILYQSN) are homomultimerization. Over residues 25-34 (SNPYPNDSGT) the composition is skewed to polar residues. Disordered stretches follow at residues 25 to 48 (SNPY…WRAR) and 66 to 103 (GLQE…TATT). The Nuclear localization signal and RNA-binding (RRE) motif lies at 34–50 (TRQARKNRRRRWRARQR). A compositionally biased stretch (basic residues) spans 36-48 (QARKNRRRRWRAR). Residues 73–84 (LPLPPLDRLSLN) carry the Nuclear export signal and binding to XPO1 motif. The residue at position 92 (Ser-92) is a Phosphoserine; by host.

Belongs to the HIV-1 REV protein family. As to quaternary structure, homomultimer; when bound to the RRE. Multimeric assembly is essential for activity and may involve XPO1. Binds to human KPNB1, XPO1, TNPO1, RANBP5 and IPO7. Interacts with the viral Integrase. Interacts with human KHDRBS1. Interacts with human NAP1; this interaction decreases Rev multimerization and stimulates its activity. Interacts with human DEAD-box helicases DDX3 and DDX24; these interactions may serve for viral RNA export to the cytoplasm and packaging, respectively. Interacts with human PSIP1; this interaction may inhibit HIV-1 DNA integration by promoting dissociation of the Integrase-LEDGF/p75 complex. Asymmetrically arginine dimethylated at one site by host PRMT6. Methylation impairs the RNA-binding activity and export of viral RNA from the nucleus to the cytoplasm. Post-translationally, phosphorylated by protein kinase CK2. Presence of, and maybe binding to the N-terminus of the regulatory beta subunit of CK2 is necessary for CK2-mediated Rev's phosphorylation.

The protein localises to the host nucleus. It localises to the host nucleolus. The protein resides in the host cytoplasm. Functionally, escorts unspliced or incompletely spliced viral pre-mRNAs (late transcripts) out of the nucleus of infected cells. These pre-mRNAs carry a recognition sequence called Rev responsive element (RRE) located in the env gene, that is not present in fully spliced viral mRNAs (early transcripts). This function is essential since most viral proteins are translated from unspliced or partially spliced pre-mRNAs which cannot exit the nucleus by the pathway used by fully processed cellular mRNAs. Rev itself is translated from a fully spliced mRNA that readily exits the nucleus. Rev's nuclear localization signal (NLS) binds directly to KPNB1/Importin beta-1 without previous binding to KPNA1/Importin alpha-1. KPNB1 binds to the GDP bound form of RAN (Ran-GDP) and targets Rev to the nucleus. In the nucleus, the conversion from Ran-GDP to Ran-GTP dissociates Rev from KPNB1 and allows Rev's binding to the RRE in viral pre-mRNAs. Rev multimerization on the RRE via cooperative assembly exposes its nuclear export signal (NES) to the surface. Rev can then form a complex with XPO1/CRM1 and Ran-GTP, leading to nuclear export of the complex. Conversion from Ran-GTP to Ran-GDP mediates dissociation of the Rev/RRE/XPO1/RAN complex, so that Rev can return to the nucleus for a subsequent round of export. Beside KPNB1, also seems to interact with TNPO1/Transportin-1, RANBP5/IPO5 and IPO7/RANBP7 for nuclear import. The nucleoporin-like HRB/RIP is an essential cofactor that probably indirectly interacts with Rev to release HIV RNAs from the perinuclear region to the cytoplasm. The chain is Protein Rev from Pan troglodytes (Chimpanzee).